The primary structure comprises 252 residues: Ribosomal RNA small subunit methyltransferase NEP1 (252 aa).

S-adenosyl-L-methionine-binding positions include Leu180, Gly207, 212-214 (GKD), and 227-232 (LSNYPL).

Belongs to the class IV-like SAM-binding methyltransferase superfamily. RNA methyltransferase NEP1 family. Homodimer. Interacts with snoRNA U3. Interacts with NOP14 and MPP10. Component of the ribosomal small subunit (SSU) processome composed of at least 40 protein subunits and snoRNA U3.

Its subcellular location is the nucleus. The protein resides in the nucleolus. The enzyme catalyses pseudouridine(1191) in yeast 18S rRNA + S-adenosyl-L-methionine = N(1)-methylpseudouridine(1191) in yeast 18S rRNA + S-adenosyl-L-homocysteine + H(+). S-adenosyl-L-methionine-dependent pseudouridine N(1)-methyltransferase that methylates pseudouridine at position 1189 (Psi1189) in 18S rRNA. Involved the biosynthesis of the hypermodified N1-methyl-N3-(3-amino-3-carboxypropyl) pseudouridine (m1acp3-Psi) conserved in eukaryotic 18S rRNA. N1-methylation is independent on acp-modification at the N3-position of U1191. Also has an essential role in 40S ribosomal subunit biogenesis independent on its methyltransferase activity, facilitating the incorporation of ribosomal protein S19 (RPS19A/RPS19B) during the formation of pre-ribosomes. This chain is Ribosomal RNA small subunit methyltransferase NEP1, found in Saccharomyces cerevisiae (strain ATCC 204508 / S288c) (Baker's yeast).